Consider the following 204-residue polypeptide: Rho GDP-dissociation inhibitor 1 (204 aa).

A disordered region spans residues 1-36 (MAEQEPTAEQLAQIAAENEEDEHSVNYKPPAQKSIQ). Ala2 bears the N-acetylalanine mark. Ser34 is modified (phosphoserine). Residue Lys43 is modified to N6-acetyllysine. Ser47 carries the post-translational modification Phosphoserine. Lys105 and Lys127 each carry N6-acetyllysine. Glycyl lysine isopeptide (Lys-Gly) (interchain with G-Cter in SUMO1); alternate cross-links involve residues Lys138 and Lys141. Glycyl lysine isopeptide (Lys-Gly) (interchain with G-Cter in SUMO2); alternate cross-links involve residues Lys138 and Lys141. Lys141 bears the N6-acetyllysine; alternate mark. Residue Lys141 is modified to N6-succinyllysine; alternate. Lys178 carries the post-translational modification N6-acetyllysine.

It belongs to the Rho GDI family. As to quaternary structure, monomer. Interacts with FER. Interacts with PLXNB3. Forms a heterodimer with RAC1. Interacts with RHOA, the affinity is increased by three orders of magnitude when RHOA is prenylated. Interacts with PSMD10; the interaction increases ARHGDIA association with RHOA, leading to ARHGDIA-mediated inactivation of RHOA and ROCK and prolonged AKT activation. Interacts with KANK2; the interaction is direct and may regulate the interaction of ARHGDIA with RHOA, RAC1 and CDC42. Interacts with RHOC. Interacts with CDC42. Interacts with NGFR (via death domain); NGFR binding decreases the affinity for RHOA.

The protein resides in the cytoplasm. Functionally, controls Rho proteins homeostasis. Regulates the GDP/GTP exchange reaction of the Rho proteins by inhibiting the dissociation of GDP from them, and the subsequent binding of GTP to them. Retains Rho proteins such as CDC42, RAC1 and RHOA in an inactive cytosolic pool, regulating their stability and protecting them from degradation. Actively involved in the recycling and distribution of activated Rho GTPases in the cell, mediates extraction from membranes of both inactive and activated molecules due its exceptionally high affinity for prenylated forms. Through the modulation of Rho proteins, may play a role in cell motility regulation. In glioma cells, inhibits cell migration and invasion by mediating the signals of SEMA5A and PLXNB3 that lead to inactivation of RAC1. This Homo sapiens (Human) protein is Rho GDP-dissociation inhibitor 1 (ARHGDIA).